The primary structure comprises 94 residues: Co-chaperonin GroES (94 aa).

Belongs to the GroES chaperonin family. In terms of assembly, heptamer of 7 subunits arranged in a ring. Interacts with the chaperonin GroEL.

Its subcellular location is the cytoplasm. Functionally, together with the chaperonin GroEL, plays an essential role in assisting protein folding. The GroEL-GroES system forms a nano-cage that allows encapsulation of the non-native substrate proteins and provides a physical environment optimized to promote and accelerate protein folding. GroES binds to the apical surface of the GroEL ring, thereby capping the opening of the GroEL channel. This chain is Co-chaperonin GroES, found in Bacillus pumilus (strain SAFR-032).